The primary structure comprises 917 residues: MVNPSPASFWTQANALLRKNLTYQRKHIWTNVRLILVPLFLCLILLAIQQVLDALMKGVSDMSNCGGNVTLPGGICPIPNPPSLPPMLQIPQHELRSVKTDFFSYKDLPDKLCRETGSCPVTILFTGDKLPLGKALSANIFSTSFVVNSSDLLPTLANNVLGSTEAAGEDNYEDPGIASDLPIYSIQPSCSANSTWPLSLGQIQTAVKCVQGLCLWRNNSVEVNDELFKGSWRGNPAGMPNEIVAAYDLMSTDRKNFNVTIWYNSTYNDEFATGQALKLVRVPRSINLISNAYLKFLKGPGTRILFEFLKEVPKEETKMNQDIASLLGPLFFTWVVLLLFPVILTSLVYEKQERLRIIMKMHGLGDGPYWMISYAYFLTISMLYVISLVGFGSAIGLKYFRRNDYSIQFVFYFIYSNLQISLAFLVSSIFSKVKTVTVIAYILVYGTGLLGSFLFQKMIETQSFPEEWILAMELYPGFSLYRGLYEFSQYASRGNGMKWQDLSDSGMGEVFCIMSVEWFLALIVAYYIDQVFTSGKHPFFFLVNLFKSPSSLPRRPTVQRLDSKRVFIDMDKHDVTQERESVQKLRNEGSTGHAILCDNLKKVYPGRDGNPPKMAVRGLYLSVSSGECFGMLGPNGAGKTSFISMMTGLLKPSSGTALVQGLDICKDMNKVYTSMGVCPQHDLLWETLTGREHLLFYGRLKNIKGSDLTQAVEESLKSVSLYDGGVGDKPAGNYSGGMKRRLSVAISLIGNPKVVYLDEPSTGLDPASRKNLWNVIKRAKQNTAIILTTHSMEEAEFLCDRLGIFVDGGLQCIGNSKELKSRYGGSYVFTMTTSSKHEEEVERLVESVSPNAKKIYHLAGTQKFELPKQEVRIAEVFRAVEKAKANFTVFAWGLADTTLEDVFIKVARTAQAFISLS.

6 helical membrane-spanning segments follow: residues 34-54 (LILV…VLDA), 323-343 (IASL…FPVI), 377-397 (FLTI…AIGL), 409-429 (FVFY…VSSI), 435-455 (TVTV…SFLF), and 508-528 (GEVF…AYYI). The region spanning 595–832 (ILCDNLKKVY…YGGSYVFTMT (238 aa)) is the ABC transporter domain. Position 633 to 640 (633 to 640 (GPNGAGKT)) interacts with ATP.

The protein belongs to the ABC transporter superfamily. ABCA family. CPR flippase (TC 3.A.1.211) subfamily.

The protein localises to the membrane. The protein is ABC transporter A family member 12 (ABCA12) of Arabidopsis thaliana (Mouse-ear cress).